We begin with the raw amino-acid sequence, 395 residues long: Acetate kinase (395 aa).

Asn10 serves as a coordination point for Mg(2+). An ATP-binding site is contributed by Lys17. A substrate-binding site is contributed by Arg87. The active-site Proton donor/acceptor is the Asp144. ATP-binding positions include 204–208 (HLGNG), 279–281 (DMR), and 327–331 (GIGEN). Glu381 contacts Mg(2+).

The protein belongs to the acetokinase family. As to quaternary structure, homodimer. It depends on Mg(2+) as a cofactor. Requires Mn(2+) as cofactor.

Its subcellular location is the cytoplasm. The enzyme catalyses acetate + ATP = acetyl phosphate + ADP. The protein operates within metabolic intermediate biosynthesis; acetyl-CoA biosynthesis; acetyl-CoA from acetate: step 1/2. Its function is as follows. Catalyzes the formation of acetyl phosphate from acetate and ATP. Can also catalyze the reverse reaction. This is Acetate kinase from Stutzerimonas stutzeri (strain A1501) (Pseudomonas stutzeri).